The chain runs to 207 residues: FMN-dependent NADH:quinone oxidoreductase 1 (207 aa).

FMN is bound by residues Ser9, 15-17, and 139-142; these read SIS and TRGG.

It belongs to the azoreductase type 1 family. Homodimer. The cofactor is FMN.

The enzyme catalyses 2 a quinone + NADH + H(+) = 2 a 1,4-benzosemiquinone + NAD(+). It catalyses the reaction N,N-dimethyl-1,4-phenylenediamine + anthranilate + 2 NAD(+) = 2-(4-dimethylaminophenyl)diazenylbenzoate + 2 NADH + 2 H(+). Its function is as follows. Quinone reductase that provides resistance to thiol-specific stress caused by electrophilic quinones. Also exhibits azoreductase activity. Catalyzes the reductive cleavage of the azo bond in aromatic azo compounds to the corresponding amines. The protein is FMN-dependent NADH:quinone oxidoreductase 1 of Trichormus variabilis (strain ATCC 29413 / PCC 7937) (Anabaena variabilis).